Here is a 559-residue protein sequence, read N- to C-terminus: Formate--tetrahydrofolate ligase (559 aa).

68-75 (TPAGEGKT) lines the ATP pocket.

It belongs to the formate--tetrahydrofolate ligase family.

It catalyses the reaction (6S)-5,6,7,8-tetrahydrofolate + formate + ATP = (6R)-10-formyltetrahydrofolate + ADP + phosphate. Its pathway is one-carbon metabolism; tetrahydrofolate interconversion. The polypeptide is Formate--tetrahydrofolate ligase (Moorella thermoacetica (strain ATCC 39073 / JCM 9320)).